An 86-amino-acid chain; its full sequence is Small ribosomal subunit protein uS17 (86 aa).

It belongs to the universal ribosomal protein uS17 family. In terms of assembly, part of the 30S ribosomal subunit.

Functionally, one of the primary rRNA binding proteins, it binds specifically to the 5'-end of 16S ribosomal RNA. In Exiguobacterium sp. (strain ATCC BAA-1283 / AT1b), this protein is Small ribosomal subunit protein uS17.